The sequence spans 83 residues: Kunitz-type serine protease inhibitor TCI (83 aa).

The first 25 residues, 1–25 (MSSGRLLLLLGLLTLWAELTPVSGL), serve as a signal peptide directing secretion. In terms of domain architecture, BPTI/Kunitz inhibitor spans 31–81 (CELPAVSGFCKAYIPSFYYNPDASACQKFIYGGCGGNANKFKTIEECHRTC). 3 disulfides stabilise this stretch: Cys-31-Cys-81, Cys-40-Cys-64, and Cys-56-Cys-77.

Expressed by the venom gland.

The protein resides in the secreted. Serine protease inhibitor that strongly inhibits chymotrypsin (Ki=84.6 nM) and trypsin (Ki=391 nM). The polypeptide is Kunitz-type serine protease inhibitor TCI (Ophiophagus hannah (King cobra)).